The sequence spans 83 residues: Small ribosomal subunit protein bS16 (83 aa).

The protein belongs to the bacterial ribosomal protein bS16 family.

In Thermosynechococcus vestitus (strain NIES-2133 / IAM M-273 / BP-1), this protein is Small ribosomal subunit protein bS16.